The sequence spans 590 residues: Peroxisomal targeting signal receptor (590 aa).

C6 is covalently cross-linked (Glycyl cysteine thioester (Cys-Gly) (interchain with G-Cter in ubiquitin)). The interval 7–29 (SVGSNPLAQLNKHAQGQGSSLSN) is amphipathic helix 1 (AH1). K18 is covalently cross-linked (Glycyl lysine isopeptide (Lys-Gly) (interchain with G-Cter in ubiquitin)). Residues 18 to 30 (KHAQGQGSSLSNT) are compositionally biased toward polar residues. Positions 18–45 (KHAQGQGSSLSNTHVRHSGGVSGSNVFR) are disordered. The segment at 56–74 (RQQLNSFMSQPMRLGEDKM) is amphipathic helix 2 (AH2). Short sequence motifs (wxxxF/Y motif) lie at residues 108–112 (WTREF), 139–143 (WKFRY), and 178–182 (WNDKF). The segment at 227–243 (FQEVWDSIQQDTEEMLS) is amphipathic helix 4 (AH4). TPR repeat units follow at residues 285 to 319 (NPNAYQIGCILMENGAKLSEAALAFEAAIKQDPKH), 320 to 353 (VDAWLKLGIVQIQNEKELNGMSALETCLKLDPNN), 424 to 457 (PDIQLCLGLLFYANDEFDRTIDCFQAALKVNPND), 459 to 491 (LMWNRLGASLANSNRSEEAIQAYHRALQLKPSF), and 493 to 525 (RARYNLAVSSMNIGCYKEAAEHLLTALSMHDVE).

This sequence belongs to the peroxisomal targeting signal receptor family. In terms of assembly, interacts (via WxxxF/Y and LVxEF motifs) with PEX14; promoting translocation through the PEX13-PEX14 docking complex. Monoubiquitinated at Cys-6 by PEX2 during PEX5 passage through the retrotranslocation channel: monoubiquitination acts as a signal for PEX5 extraction and is required for proper export from peroxisomes and recycling. When PEX5 recycling is compromised, polyubiquitinated at Lys-18 by PEX10 during its passage through the retrotranslocation channel, leading to its degradation.

It localises to the cytoplasm. The protein resides in the cytosol. Its subcellular location is the peroxisome matrix. Receptor that mediates peroxisomal import of proteins containing a C-terminal PTS1-type tripeptide peroxisomal targeting signal (SKL-type). Binds to cargo proteins containing a PTS1 peroxisomal targeting signal in the cytosol, and translocates them into the peroxisome matrix by passing through the PEX13-PEX14 docking complex along with cargo proteins. PEX5 receptor is then retrotranslocated into the cytosol, leading to release of bound cargo in the peroxisome matrix, and reset for a subsequent peroxisome import cycle. The sequence is that of Peroxisomal targeting signal receptor (PEX5) from Candida glabrata (strain ATCC 2001 / BCRC 20586 / JCM 3761 / NBRC 0622 / NRRL Y-65 / CBS 138) (Yeast).